Consider the following 85-residue polypeptide: Fungal defensin triintsin (85 aa).

Residues M1–A21 form the signal peptide. Positions A22–R47 are excised as a propeptide. 3 disulfides stabilise this stretch: C51–C72, C58–C80, and C62–C82.

This sequence belongs to the invertebrate defensin family. Disulfide bonds are essential for antimicrobial activity.

The protein localises to the secreted. Its function is as follows. Antimicrobial peptide with broad-spectrum activity against Gram-positive bacteria, Gram-negative bacteria, and fungi. Also inhibits clinical isolates, including methicillin-resistant S.aureus (MRSA) (MIC=32 uM), K.pneumoniae, C.albicans and C.parapsilosis. Displays minimal inhibitory concentration (MIC) values similar to minimal bactericidal concentrations (MBC), suggesting a disruptive mechanism mode of action associated with membrane lysis. In vitro, shows hemolytic activity against human red blood cells. The polypeptide is Fungal defensin triintsin (Trichophyton interdigitale (strain MR816)).